Reading from the N-terminus, the 195-residue chain is MRLLEERIKKDGQVLGEDVLKVDNFLNHQVDPELMAAMGEEFKRLFEGAPITKILTVESSGIAPAVFSGLAFHVPVVFARKHKSLTLQDNMYSATVYSYTKKVNNHISISKKFLNENDRVLVIDDFLANGQAVEGLLEIIDQAGAQLEGVGIVIEKTFQKGRELLDQRGIHVESLARIAAFEQGEVVFLDENNEN.

Positions 20 and 27 each coordinate xanthine. 5-phospho-alpha-D-ribose 1-diphosphate is bound at residue 128–132 (ANGQA). Lys-156 contributes to the xanthine binding site.

It belongs to the purine/pyrimidine phosphoribosyltransferase family. Xpt subfamily. Homodimer.

It localises to the cytoplasm. The catalysed reaction is XMP + diphosphate = xanthine + 5-phospho-alpha-D-ribose 1-diphosphate. Its pathway is purine metabolism; XMP biosynthesis via salvage pathway; XMP from xanthine: step 1/1. Its function is as follows. Converts the preformed base xanthine, a product of nucleic acid breakdown, to xanthosine 5'-monophosphate (XMP), so it can be reused for RNA or DNA synthesis. This chain is Xanthine phosphoribosyltransferase, found in Latilactobacillus sakei subsp. sakei (strain 23K) (Lactobacillus sakei subsp. sakei).